Here is a 354-residue protein sequence, read N- to C-terminus: Protein RecA (354 aa).

Glycine 67–threonine 74 contacts ATP. Positions methionine 333–glutamine 354 are disordered.

It belongs to the RecA family.

The protein localises to the cytoplasm. Can catalyze the hydrolysis of ATP in the presence of single-stranded DNA, the ATP-dependent uptake of single-stranded DNA by duplex DNA, and the ATP-dependent hybridization of homologous single-stranded DNAs. It interacts with LexA causing its activation and leading to its autocatalytic cleavage. This chain is Protein RecA, found in Laribacter hongkongensis (strain HLHK9).